A 438-amino-acid chain; its full sequence is 3-phosphoshikimate 1-carboxyvinyltransferase (438 aa).

Residues Lys-21, Ser-22, and Arg-26 each coordinate 3-phosphoshikimate. Lys-21 lines the phosphoenolpyruvate pocket. The phosphoenolpyruvate site is built by Gly-95 and Arg-123. Ser-167, Gln-169, Asp-315, and Lys-342 together coordinate 3-phosphoshikimate. Position 169 (Gln-169) interacts with phosphoenolpyruvate. Asp-315 serves as the catalytic Proton acceptor. Phosphoenolpyruvate is bound by residues Arg-346 and Arg-387.

Belongs to the EPSP synthase family. In terms of assembly, monomer.

It localises to the cytoplasm. The catalysed reaction is 3-phosphoshikimate + phosphoenolpyruvate = 5-O-(1-carboxyvinyl)-3-phosphoshikimate + phosphate. The protein operates within metabolic intermediate biosynthesis; chorismate biosynthesis; chorismate from D-erythrose 4-phosphate and phosphoenolpyruvate: step 6/7. Catalyzes the transfer of the enolpyruvyl moiety of phosphoenolpyruvate (PEP) to the 5-hydroxyl of shikimate-3-phosphate (S3P) to produce enolpyruvyl shikimate-3-phosphate and inorganic phosphate. The protein is 3-phosphoshikimate 1-carboxyvinyltransferase of Coxiella burnetii (strain CbuG_Q212) (Coxiella burnetii (strain Q212)).